Reading from the N-terminus, the 301-residue chain is Ribosomal protein L11 methyltransferase (301 aa).

Residues T146, G167, D189, and N234 each contribute to the S-adenosyl-L-methionine site.

Belongs to the methyltransferase superfamily. PrmA family.

The protein resides in the cytoplasm. The catalysed reaction is L-lysyl-[protein] + 3 S-adenosyl-L-methionine = N(6),N(6),N(6)-trimethyl-L-lysyl-[protein] + 3 S-adenosyl-L-homocysteine + 3 H(+). Functionally, methylates ribosomal protein L11. The polypeptide is Ribosomal protein L11 methyltransferase (Acinetobacter baumannii (strain SDF)).